The following is a 180-amino-acid chain: Hypoxanthine-guanine phosphoribosyltransferase (180 aa).

Residues Lys43 and Gly44 each contribute to the diphosphate site. Glu99 and Asp100 together coordinate Mg(2+). Residue Asp103 is the Proton acceptor of the active site. Residues Lys131, 152–153 (FV), and Asp159 contribute to the GMP site. Arg165 is a diphosphate binding site.

Belongs to the purine/pyrimidine phosphoribosyltransferase family. It depends on Mg(2+) as a cofactor.

It localises to the cytoplasm. It catalyses the reaction IMP + diphosphate = hypoxanthine + 5-phospho-alpha-D-ribose 1-diphosphate. It carries out the reaction GMP + diphosphate = guanine + 5-phospho-alpha-D-ribose 1-diphosphate. The protein operates within purine metabolism; IMP biosynthesis via salvage pathway; IMP from hypoxanthine: step 1/1. Its pathway is purine metabolism; GMP biosynthesis via salvage pathway; GMP from guanine: step 1/1. Purine salvage pathway enzyme that catalyzes the transfer of the ribosyl-5-phosphate group from 5-phospho-alpha-D-ribose 1-diphosphate (PRPP) to the N9 position of the 6-oxopurines hypoxanthine and guanine to form the corresponding ribonucleotides IMP (inosine 5'-monophosphate) and GMP (guanosine 5'-monophosphate), with the release of PPi. The chain is Hypoxanthine-guanine phosphoribosyltransferase (hpt) from Streptococcus pneumoniae serotype 4 (strain ATCC BAA-334 / TIGR4).